A 208-amino-acid chain; its full sequence is Mediator of RNA polymerase II transcription subunit 18 (208 aa).

Serine 66 carries the post-translational modification Phosphoserine.

It belongs to the Mediator complex subunit 18 family. In terms of assembly, component of the Mediator complex, which is composed of MED1, MED4, MED6, MED7, MED8, MED9, MED10, MED11, MED12, MED13, MED13L, MED14, MED15, MED16, MED17, MED18, MED19, MED20, MED21, MED22, MED23, MED24, MED25, MED26, MED27, MED29, MED30, MED31, CCNC, CDK8 and CDC2L6/CDK11. The MED12, MED13, CCNC and CDK8 subunits form a distinct module termed the CDK8 module. Mediator containing the CDK8 module is less active than Mediator lacking this module in supporting transcriptional activation. Individual preparations of the Mediator complex lacking one or more distinct subunits have been variously termed ARC, CRSP, DRIP, PC2, SMCC and TRAP.

Its subcellular location is the nucleus. In terms of biological role, component of the Mediator complex, a coactivator involved in the regulated transcription of nearly all RNA polymerase II-dependent genes. Mediator functions as a bridge to convey information from gene-specific regulatory proteins to the basal RNA polymerase II transcription machinery. Mediator is recruited to promoters by direct interactions with regulatory proteins and serves as a scaffold for the assembly of a functional preinitiation complex with RNA polymerase II and the general transcription factors. The chain is Mediator of RNA polymerase II transcription subunit 18 (MED18) from Bos taurus (Bovine).